We begin with the raw amino-acid sequence, 486 residues long: Glutamate--tRNA ligase (486 aa).

A 'HIGH' region motif is present at residues 12 to 22 (PSPTGTPHVGL). The 'KMSKS' region signature appears at 256 to 260 (KLSKR). Position 259 (lysine 259) interacts with ATP.

This sequence belongs to the class-I aminoacyl-tRNA synthetase family. Glutamate--tRNA ligase type 1 subfamily. Monomer.

It is found in the cytoplasm. The catalysed reaction is tRNA(Glu) + L-glutamate + ATP = L-glutamyl-tRNA(Glu) + AMP + diphosphate. Catalyzes the attachment of glutamate to tRNA(Glu) in a two-step reaction: glutamate is first activated by ATP to form Glu-AMP and then transferred to the acceptor end of tRNA(Glu). The polypeptide is Glutamate--tRNA ligase (Mycolicibacterium smegmatis (strain ATCC 700084 / mc(2)155) (Mycobacterium smegmatis)).